We begin with the raw amino-acid sequence, 1172 residues long: Putative cadmium/zinc-transporting ATPase HMA4 (1172 aa).

Residues 1–93 lie on the Cytoplasmic side of the membrane; the sequence is MALQNKEEEK…VRVNGETSFK (93 aa). Residues 17–83 enclose the HMA domain; the sequence is QKSYFDVLGI…ALNEARLEAN (67 aa). The helical transmembrane segment at 94–115 threads the bilayer; that stretch reads NKWPSPFAVVSGLLLLLSFLKF. The Extracellular portion of the chain corresponds to 116–118; it reads VYS. Residues 119–138 traverse the membrane as a helical segment; the sequence is PLRWLAVAAVAAGIYPILAK. Topologically, residues 139–145 are cytoplasmic; it reads AFASIKR. The chain crosses the membrane as a helical span at residues 146-166; that stretch reads PRIDINILVIITVIATLAMQD. Phenylalanine 167 is a topological domain (extracellular). A helical transmembrane segment spans residues 168–188; sequence MEAAAVVFLFTISDWLETRAS. Residues 189 to 314 lie on the Cytoplasmic side of the membrane; the sequence is YKATSVMQSL…KTKSQRLIDK (126 aa). A helical transmembrane segment spans residues 315–337; that stretch reads CSQYYTPAIILVSACVAIVPVIM. At 338–345 the chain is on the extracellular side; it reads KVHNLKHW. The helical transmembrane segment at 346–363 threads the bilayer; that stretch reads FHLALVVLVSGCPCGLIL. Topologically, residues 364–656 are cytoplasmic; it reads STPVATFCAL…KLARRARRKV (293 aa). Aspartate 401 (4-aspartylphosphate intermediate) is an active-site residue. Aspartate 601 and aspartate 605 together coordinate Mg(2+). Residues 657–676 form a helical membrane-spanning segment; sequence VENVCLSIILKAGILALAFA. At 677–680 the chain is on the extracellular side; that stretch reads GHPL. Residues 681 to 700 traverse the membrane as a helical segment; sequence IWAAVLVDVGTCLLVIFNSM. Residues 701-1172 lie on the Cytoplasmic side of the membrane; that stretch reads LLLREKKKIG…HHHHHHHVSA (472 aa).

It belongs to the cation transport ATPase (P-type) (TC 3.A.3) family. Type IB subfamily.

It is found in the membrane. The enzyme catalyses Zn(2+)(in) + ATP + H2O = Zn(2+)(out) + ADP + phosphate + H(+). The catalysed reaction is Cd(2+)(in) + ATP + H2O = Cd(2+)(out) + ADP + phosphate + H(+). Its function is as follows. Involved in cadmium/zinc transport. This is Putative cadmium/zinc-transporting ATPase HMA4 (HMA4) from Arabidopsis thaliana (Mouse-ear cress).